The following is an 89-amino-acid chain: Small ribosomal subunit protein uS15 (89 aa).

This sequence belongs to the universal ribosomal protein uS15 family. As to quaternary structure, part of the 30S ribosomal subunit. Forms a bridge to the 50S subunit in the 70S ribosome, contacting the 23S rRNA.

In terms of biological role, one of the primary rRNA binding proteins, it binds directly to 16S rRNA where it helps nucleate assembly of the platform of the 30S subunit by binding and bridging several RNA helices of the 16S rRNA. Its function is as follows. Forms an intersubunit bridge (bridge B4) with the 23S rRNA of the 50S subunit in the ribosome. This is Small ribosomal subunit protein uS15 from Janthinobacterium sp. (strain Marseille) (Minibacterium massiliensis).